The sequence spans 291 residues: Pyridoxal 5'-phosphate synthase subunit PdxS (291 aa).

A D-ribose 5-phosphate-binding site is contributed by D23. The active-site Schiff-base intermediate with D-ribose 5-phosphate is K80. G152 is a D-ribose 5-phosphate binding site. R164 provides a ligand contact to D-glyceraldehyde 3-phosphate. Residues G213 and G234–S235 contribute to the D-ribose 5-phosphate site.

It belongs to the PdxS/SNZ family. In terms of assembly, in the presence of PdxT, forms a dodecamer of heterodimers.

It catalyses the reaction aldehydo-D-ribose 5-phosphate + D-glyceraldehyde 3-phosphate + L-glutamine = pyridoxal 5'-phosphate + L-glutamate + phosphate + 3 H2O + H(+). It participates in cofactor biosynthesis; pyridoxal 5'-phosphate biosynthesis. Functionally, catalyzes the formation of pyridoxal 5'-phosphate from ribose 5-phosphate (RBP), glyceraldehyde 3-phosphate (G3P) and ammonia. The ammonia is provided by the PdxT subunit. Can also use ribulose 5-phosphate and dihydroxyacetone phosphate as substrates, resulting from enzyme-catalyzed isomerization of RBP and G3P, respectively. The chain is Pyridoxal 5'-phosphate synthase subunit PdxS from Haemophilus influenzae (strain PittGG).